A 104-amino-acid polypeptide reads, in one-letter code: MLTVIAEIRTRPGQHHRQAVLDQFAKIVPTVLKEEGCHGYAPMVDCAAGVSFQSMAPDSIVMIEQWESIAHLEAHLQTPHMKAYSEAVKGDVLEMNIRILQPGI.

One can recognise an ABM domain in the interval 2–100 (LTVIAEIRTR…DVLEMNIRIL (99 aa)).

Homodimer.

It carries out the reaction menadiol + 2 O2 = menadione + 2 superoxide + 2 H(+). Functionally, can oxidize menadiol to menadione. The protein is Probable quinol monooxygenase YgiN (ygiN) of Escherichia coli O157:H7.